The sequence spans 137 residues: 6,7-dimethyl-8-ribityllumazine synthase (137 aa).

5-amino-6-(D-ribitylamino)uracil contacts are provided by residues Phe-11, 43-45 (SFD), and 67-69 (CVI). Position 72–73 (72–73 (DT)) interacts with (2S)-2-hydroxy-3-oxobutyl phosphate. Catalysis depends on His-75, which acts as the Proton donor. Residue Leu-100 coordinates 5-amino-6-(D-ribitylamino)uracil. Arg-115 is a (2S)-2-hydroxy-3-oxobutyl phosphate binding site.

This sequence belongs to the DMRL synthase family. Forms an icosahedral capsid composed of 60 subunits, arranged as a dodecamer of pentamers.

It carries out the reaction (2S)-2-hydroxy-3-oxobutyl phosphate + 5-amino-6-(D-ribitylamino)uracil = 6,7-dimethyl-8-(1-D-ribityl)lumazine + phosphate + 2 H2O + H(+). It participates in cofactor biosynthesis; riboflavin biosynthesis; riboflavin from 2-hydroxy-3-oxobutyl phosphate and 5-amino-6-(D-ribitylamino)uracil: step 1/2. Its function is as follows. Catalyzes the formation of 6,7-dimethyl-8-ribityllumazine by condensation of 5-amino-6-(D-ribitylamino)uracil with 3,4-dihydroxy-2-butanone 4-phosphate. This is the penultimate step in the biosynthesis of riboflavin. This is 6,7-dimethyl-8-ribityllumazine synthase from Methanococcus maripaludis (strain C5 / ATCC BAA-1333).